A 23-amino-acid chain; its full sequence is Basic phospholipase A2 intermexin (23 aa).

Belongs to the phospholipase A2 family. Group II subfamily. Ca(2+) serves as cofactor. In terms of processing, contains 7 disulfide bonds. As to expression, expressed by the venom gland.

It localises to the secreted. It catalyses the reaction a 1,2-diacyl-sn-glycero-3-phosphocholine + H2O = a 1-acyl-sn-glycero-3-phosphocholine + a fatty acid + H(+). Snake venom phospholipase A2 (PLA2) that shows presynaptic neurotoxicity and low myotoxicity. PLA2 catalyzes the calcium-dependent hydrolysis of the 2-acyl groups in 3-sn-phosphoglycerides. The protein is Basic phospholipase A2 intermexin of Gloydius intermedius (Central Asian pit viper).